The chain runs to 340 residues: Glycerol-3-phosphate dehydrogenase [NAD(P)+] (340 aa).

The NADPH site is built by Ser-12, Trp-13, Lys-34, and Lys-107. Residues Lys-107, Gly-138, and Ser-140 each coordinate sn-glycerol 3-phosphate. Ala-142 contributes to the NADPH binding site. The sn-glycerol 3-phosphate site is built by Lys-193, Asp-246, Ser-256, Arg-257, and Asn-258. Residue Lys-193 is the Proton acceptor of the active site. Arg-257 lines the NADPH pocket. NADPH contacts are provided by Ile-281 and Glu-283.

It belongs to the NAD-dependent glycerol-3-phosphate dehydrogenase family.

It localises to the cytoplasm. The catalysed reaction is sn-glycerol 3-phosphate + NAD(+) = dihydroxyacetone phosphate + NADH + H(+). The enzyme catalyses sn-glycerol 3-phosphate + NADP(+) = dihydroxyacetone phosphate + NADPH + H(+). The protein operates within membrane lipid metabolism; glycerophospholipid metabolism. Functionally, catalyzes the reduction of the glycolytic intermediate dihydroxyacetone phosphate (DHAP) to sn-glycerol 3-phosphate (G3P), the key precursor for phospholipid synthesis. In Enterococcus faecalis (strain ATCC 700802 / V583), this protein is Glycerol-3-phosphate dehydrogenase [NAD(P)+].